Consider the following 238-residue polypeptide: MGCSGCSGGCGSSCGGCGSSCGGCGSGYGGCGSGCCVPVCCCKPVCCCVPACSCSSCGSCGGSKGVCGSCGGCKGGCGSCGGSKGGCGSSCCVPVCCSSSCGSCGGSKGVCGFRGGSKGGCGSCGCSQCSCYKPCCCSSGCGSSCCQSSCCKPSCSQSSCCKPCCSQSSCCKPCCCSSGCGSSCCQSSCCKPCCSQSSCCKPCCCSSGCGSSCCQSSCCKPCSSQSSCCVPICCQCKI.

Repeat copies occupy residues 35-38 (CCVP), 41-44 (CCKP), 47-50 (CCVP), 91-94 (CCVP), 150-153 (CCKP), 160-163 (CCKP), 170-173 (CCKP), 189-192 (CCKP), 199-202 (CCKP), 218-221 (CCKP), and 228-231 (CCVP). Residues 35–231 (CCVPVCCCKP…CSSQSSCCVP (197 aa)) form an 11 X 4 AA repeats of C-C-X-P region.

This sequence belongs to the KRTAP type 5 family. In terms of assembly, interacts with hair keratins. In terms of tissue distribution, restricted to hair root, not detected in any other tissues.

In terms of biological role, in the hair cortex, hair keratin intermediate filaments are embedded in an interfilamentous matrix, consisting of hair keratin-associated protein (KRTAP), which are essential for the formation of a rigid and resistant hair shaft through their extensive disulfide bond cross-linking with abundant cysteine residues of hair keratins. The matrix proteins include the high-sulfur and high-glycine-tyrosine keratins. The chain is Keratin-associated protein 5-3 (KRTAP5-3) from Homo sapiens (Human).